The following is a 51-amino-acid chain: uncharacterized protein (51 aa).

A disordered region spans residues 1-42 (MKMKTNKYMNMVRPAPPRRADPEGVRDPSTMGGGPNPFLRRS).

Its subcellular location is the mitochondrion. This is an uncharacterized protein from Saccharomyces cerevisiae (strain ATCC 204508 / S288c) (Baker's yeast).